Reading from the N-terminus, the 173-residue chain is Crossover junction endodeoxyribonuclease RuvC (173 aa).

Catalysis depends on residues Asp8, Glu67, and Asp139. Residues Asp8, Glu67, and Asp139 each contribute to the Mg(2+) site.

Belongs to the RuvC family. As to quaternary structure, homodimer which binds Holliday junction (HJ) DNA. The HJ becomes 2-fold symmetrical on binding to RuvC with unstacked arms; it has a different conformation from HJ DNA in complex with RuvA. In the full resolvosome a probable DNA-RuvA(4)-RuvB(12)-RuvC(2) complex forms which resolves the HJ. Mg(2+) is required as a cofactor.

The protein localises to the cytoplasm. The enzyme catalyses Endonucleolytic cleavage at a junction such as a reciprocal single-stranded crossover between two homologous DNA duplexes (Holliday junction).. Its function is as follows. The RuvA-RuvB-RuvC complex processes Holliday junction (HJ) DNA during genetic recombination and DNA repair. Endonuclease that resolves HJ intermediates. Cleaves cruciform DNA by making single-stranded nicks across the HJ at symmetrical positions within the homologous arms, yielding a 5'-phosphate and a 3'-hydroxyl group; requires a central core of homology in the junction. The consensus cleavage sequence is 5'-(A/T)TT(C/G)-3'. Cleavage occurs on the 3'-side of the TT dinucleotide at the point of strand exchange. HJ branch migration catalyzed by RuvA-RuvB allows RuvC to scan DNA until it finds its consensus sequence, where it cleaves and resolves the cruciform DNA. This chain is Crossover junction endodeoxyribonuclease RuvC, found in Shewanella frigidimarina (strain NCIMB 400).